The chain runs to 252 residues: 2-succinyl-6-hydroxy-2,4-cyclohexadiene-1-carboxylate synthase (252 aa).

Belongs to the AB hydrolase superfamily. MenH family. In terms of assembly, monomer.

The enzyme catalyses 5-enolpyruvoyl-6-hydroxy-2-succinyl-cyclohex-3-ene-1-carboxylate = (1R,6R)-6-hydroxy-2-succinyl-cyclohexa-2,4-diene-1-carboxylate + pyruvate. It participates in quinol/quinone metabolism; 1,4-dihydroxy-2-naphthoate biosynthesis; 1,4-dihydroxy-2-naphthoate from chorismate: step 3/7. It functions in the pathway quinol/quinone metabolism; menaquinone biosynthesis. Its function is as follows. Catalyzes a proton abstraction reaction that results in 2,5-elimination of pyruvate from 2-succinyl-5-enolpyruvyl-6-hydroxy-3-cyclohexene-1-carboxylate (SEPHCHC) and the formation of 2-succinyl-6-hydroxy-2,4-cyclohexadiene-1-carboxylate (SHCHC). The polypeptide is 2-succinyl-6-hydroxy-2,4-cyclohexadiene-1-carboxylate synthase (Escherichia coli O8 (strain IAI1)).